The chain runs to 586 residues: Arginine--tRNA ligase (586 aa).

The 'HIGH' region signature appears at 131–141 (ANPTGPMHVGH).

Belongs to the class-I aminoacyl-tRNA synthetase family. Monomer.

The protein resides in the cytoplasm. The catalysed reaction is tRNA(Arg) + L-arginine + ATP = L-arginyl-tRNA(Arg) + AMP + diphosphate. The polypeptide is Arginine--tRNA ligase (Rhizobium rhizogenes (strain K84 / ATCC BAA-868) (Agrobacterium radiobacter)).